The primary structure comprises 147 residues: Hemoglobin subunit epsilon (147 aa).

In terms of domain architecture, Globin spans 3–147 (HFTAEEKTAI…VASALAHKYH (145 aa)). Phosphoserine is present on residues S14 and S51. Residues H64 and H93 each coordinate heme b.

It belongs to the globin family. In terms of tissue distribution, red blood cells.

In terms of biological role, hemoglobin epsilon chain is an embryonic-type beta-type chain found in prenatal and neonatal marsupials. The protein is Hemoglobin subunit epsilon (HBE1) of Notamacropus eugenii (Tammar wallaby).